Here is a 287-residue protein sequence, read N- to C-terminus: uncharacterized protein (287 aa).

Residues 183 to 281 enclose the HTH araC/xylS-type domain; it reads WEAARYLQEH…GISPIEYRKI (99 aa). 2 DNA-binding regions (H-T-H motif) span residues 200 to 221 and 248 to 271; these read KDLS…QQVL and MGVI…KQIE.

This is an uncharacterized protein from Bacillus subtilis (strain 168).